The chain runs to 223 residues: MELTLHEARVIGCLLEKEITTPEQYPLSLNSLTLACNQKTSREPVLELSETQVQIAVDSLNRKRLISEQSGFGSRVVKYKHRFCNTEFSELQLSAAALAIVCLLLLRGPQTPGELRTRSNRLHEFKDVIEVEDCIRQLMNREKPFLKQLPREAGRRESRYVELFSAASSQLETAQPESASHTVAHVAVSLDAEPLELTKRVTELEQQVAELTQKLDELIASLS.

This sequence belongs to the UPF0502 family.

This Shewanella baltica (strain OS185) protein is UPF0502 protein Shew185_1758.